Here is a 342-residue protein sequence, read N- to C-terminus: Ribosomal RNA small subunit methyltransferase C (342 aa).

Belongs to the methyltransferase superfamily. RsmC family. As to quaternary structure, monomer.

The protein localises to the cytoplasm. The enzyme catalyses guanosine(1207) in 16S rRNA + S-adenosyl-L-methionine = N(2)-methylguanosine(1207) in 16S rRNA + S-adenosyl-L-homocysteine + H(+). Functionally, specifically methylates the guanine in position 1207 of 16S rRNA in the 30S particle. This is Ribosomal RNA small subunit methyltransferase C from Hahella chejuensis (strain KCTC 2396).